Reading from the N-terminus, the 93-residue chain is YcgL domain-containing protein Swoo_2115 (93 aa).

The YcgL domain maps to 1 to 85 (MICAVYKSRR…PVVNLLEEHK (85 aa)).

The chain is YcgL domain-containing protein Swoo_2115 from Shewanella woodyi (strain ATCC 51908 / MS32).